The following is a 428-amino-acid chain: 3-phosphoshikimate 1-carboxyvinyltransferase (428 aa).

Lysine 20, serine 21, and arginine 25 together coordinate 3-phosphoshikimate. Lysine 20 serves as a coordination point for phosphoenolpyruvate. 2 residues coordinate phosphoenolpyruvate: glycine 92 and arginine 120. 3-phosphoshikimate contacts are provided by serine 166, glutamine 168, aspartate 314, and lysine 341. Glutamine 168 is a phosphoenolpyruvate binding site. The Proton acceptor role is filled by aspartate 314. 2 residues coordinate phosphoenolpyruvate: arginine 345 and arginine 387.

The protein belongs to the EPSP synthase family. Monomer.

The protein resides in the cytoplasm. It carries out the reaction 3-phosphoshikimate + phosphoenolpyruvate = 5-O-(1-carboxyvinyl)-3-phosphoshikimate + phosphate. It participates in metabolic intermediate biosynthesis; chorismate biosynthesis; chorismate from D-erythrose 4-phosphate and phosphoenolpyruvate: step 6/7. Functionally, catalyzes the transfer of the enolpyruvyl moiety of phosphoenolpyruvate (PEP) to the 5-hydroxyl of shikimate-3-phosphate (S3P) to produce enolpyruvyl shikimate-3-phosphate and inorganic phosphate. This chain is 3-phosphoshikimate 1-carboxyvinyltransferase, found in Listeria monocytogenes serotype 4a (strain HCC23).